We begin with the raw amino-acid sequence, 427 residues long: Serine hydroxymethyltransferase (427 aa).

(6S)-5,6,7,8-tetrahydrofolate contacts are provided by residues L117 and 121–123; that span reads GHL. An N6-(pyridoxal phosphate)lysine modification is found at K226.

It belongs to the SHMT family. Homodimer. The cofactor is pyridoxal 5'-phosphate.

It localises to the cytoplasm. It carries out the reaction (6R)-5,10-methylene-5,6,7,8-tetrahydrofolate + glycine + H2O = (6S)-5,6,7,8-tetrahydrofolate + L-serine. The enzyme catalyses L-threonine = acetaldehyde + glycine. It catalyses the reaction L-allo-threonine = acetaldehyde + glycine. It participates in one-carbon metabolism; tetrahydrofolate interconversion. The protein operates within amino-acid biosynthesis; glycine biosynthesis; glycine from L-serine: step 1/1. In terms of biological role, its primary function is to catalyze the reversible interconversion of serine and glycine with tetrahydrofolate (THF) serving as the one-carbon carrier. This reaction serves as the major source of one-carbon groups required for the biosynthesis of purines, thymidylate, methionine, and other important biomolecules. Also exhibits THF-independent aldolase activity toward beta-hydroxyamino acids, producing glycine and aldehydes, via a retro-aldol mechanism. Thus, is able to catalyze the cleavage of L-threonine, L-allo-threonine, L-threo-beta-phenylserine and L-erythro-beta-phenylserine. This second activity is likely to be physiological in H.thermophilus, which is an organism that lacks the ortholog gene for the 'real' threonine aldolase characterized in mesophilic bacteria (LtaE), yeast and plants. The sequence is that of Serine hydroxymethyltransferase from Hydrogenobacter thermophilus (strain DSM 6534 / IAM 12695 / TK-6).